The following is a 227-amino-acid chain: Urease accessory protein UreF (227 aa).

The protein belongs to the UreF family. In terms of assembly, ureD, UreF and UreG form a complex that acts as a GTP-hydrolysis-dependent molecular chaperone, activating the urease apoprotein by helping to assemble the nickel containing metallocenter of UreC. The UreE protein probably delivers the nickel.

The protein localises to the cytoplasm. Required for maturation of urease via the functional incorporation of the urease nickel metallocenter. The protein is Urease accessory protein UreF of Bacillus sp. (strain TB-90).